The sequence spans 133 residues: Antifungal protein ginkbilobin-like protein 2 (133 aa).

Positions 1-24 (MSMGSFGFALAVMVLAVLVASAAG) are cleaved as a signal peptide. Residues 28–133 (TNLVSSACNG…CFIRYEQYSI (106 aa)) enclose the Gnk2-homologous domain. Asparagine 36 provides a ligand contact to alpha-D-mannopyranose. Cystine bridges form between cysteine 87–cysteine 96 and cysteine 99–cysteine 124. Alpha-D-mannopyranose contacts are provided by arginine 118 and glutamate 129.

Functionally, exerts antifungal activity through its carbohydrate-binding specificity. In Picea glauca (White spruce), this protein is Antifungal protein ginkbilobin-like protein 2.